A 229-amino-acid polypeptide reads, in one-letter code: 2,3-bisphosphoglycerate-dependent phosphoglycerate mutase (229 aa).

Substrate contacts are provided by residues 8-15 (RHGESAWN), 21-22 (TG), arginine 60, 87-90 (ERHY), lysine 98, 114-115 (RR), and 183-184 (GN). The active-site Tele-phosphohistidine intermediate is histidine 9. Catalysis depends on glutamate 87, which acts as the Proton donor/acceptor.

It belongs to the phosphoglycerate mutase family. BPG-dependent PGAM subfamily. Homodimer.

It carries out the reaction (2R)-2-phosphoglycerate = (2R)-3-phosphoglycerate. It participates in carbohydrate degradation; glycolysis; pyruvate from D-glyceraldehyde 3-phosphate: step 3/5. Functionally, catalyzes the interconversion of 2-phosphoglycerate and 3-phosphoglycerate. The polypeptide is 2,3-bisphosphoglycerate-dependent phosphoglycerate mutase (Polynucleobacter asymbioticus (strain DSM 18221 / CIP 109841 / QLW-P1DMWA-1) (Polynucleobacter necessarius subsp. asymbioticus)).